Here is a 114-residue protein sequence, read N- to C-terminus: Cuticle protein CP1158 (114 aa).

Glutamine 1 carries the post-translational modification Pyrrolidone carboxylic acid. 4 consecutive repeat copies span residues 1 to 17 (QVGY…NIQF), 26 to 43 (VLKG…NLQL), 70 to 87 (SVVG…VQFS), and 95 to 112 (VLVG…NLQL).

In terms of tissue distribution, calcified shell.

This Cancer pagurus (Rock crab) protein is Cuticle protein CP1158.